Consider the following 450-residue polypeptide: Saccharopine dehydrogenase [NADP(+), L-glutamate-forming] (450 aa).

NADP(+) contacts are provided by residues 9–12, 32–34, 54–55, Ile75, 97–98, 124–126, and Ser174; these read SGFV, CRT, DV, TS, and VDP. Residues 98–99 and Asp125 each bind L-saccharopine; that span reads SY. Residues Arg223 and 244 to 246 contribute to the L-saccharopine site; that span reads TLR.

Belongs to the saccharopine dehydrogenase family. In terms of assembly, homodimer.

The protein resides in the cytoplasm. The enzyme catalyses L-saccharopine + NADP(+) + H2O = (S)-2-amino-6-oxohexanoate + L-glutamate + NADPH + H(+). Its pathway is amino-acid biosynthesis; L-lysine biosynthesis via AAA pathway; L-lysine from L-alpha-aminoadipate (fungal route): step 2/3. The sequence is that of Saccharopine dehydrogenase [NADP(+), L-glutamate-forming] from Schizosaccharomyces pombe (strain 972 / ATCC 24843) (Fission yeast).